The primary structure comprises 422 residues: MTEISSMVITHAKATVEEMEDSWHGDIDLVLSQLYSNELVYECAVLKTCNRVEIYVVSSKGSSVLFHYAKEMGVSAKIVEFYDHDESLRHLLRLACGLESMIIGEDQILGQIKDFFLMAKGAGTVGKVLSTAFSKAIQVGKRVRTETFINRGAVSIASAAVDLAEDILDGLNDKHILVIGTGEMGTLVTRALSHRDMHVIYLANRTYEKARDLAEELGGEAVMFDQLEKYVRAADVVISATSAPHYVLKGDLVAKVMEGRENELLLIDIASPRDIDPAVEEIPHVILRNIDGLRVINEKNLQMRMVEAKKAEIIIDDELDMVKAQYKRQKADAIISNLYSQSHGLRHNEMEHAINKLSAYHTIGEIERKVLEDLTHAITNKILAEPTKKLRNAAEYDDDKFLDSVSRLFDIRPIKKNDGITK.

Substrate contacts are provided by residues 48–51, Ser100, 105–107, and Gln111; these read TCNR and EDQ. The active-site Nucleophile is the Cys49. Residue 180 to 185 coordinates NADP(+); that stretch reads GTGEMG.

The protein belongs to the glutamyl-tRNA reductase family. In terms of assembly, homodimer.

It catalyses the reaction (S)-4-amino-5-oxopentanoate + tRNA(Glu) + NADP(+) = L-glutamyl-tRNA(Glu) + NADPH + H(+). It participates in porphyrin-containing compound metabolism; protoporphyrin-IX biosynthesis; 5-aminolevulinate from L-glutamyl-tRNA(Glu): step 1/2. In terms of biological role, catalyzes the NADPH-dependent reduction of glutamyl-tRNA(Glu) to glutamate 1-semialdehyde (GSA). This chain is Glutamyl-tRNA reductase, found in Methanococcoides burtonii (strain DSM 6242 / NBRC 107633 / OCM 468 / ACE-M).